Reading from the N-terminus, the 933-residue chain is MAASRLDFGEVETFLDRHPELFEDYLMRKGKQELVDKWLQRHTSGQGASSLRPALAGASSLAQSNAKGSPGIGGGAGPQGSAHSHPTPGGGESAGVPLSPSWASGSRGDGSLQRRASQKELRKSFARSKAIHVNRTYDEQVTSRAQEPLSSVRRRALLRKASSLPPTTAHILSALLESRVNLPQYPPTAIDYKCHLKKHNERQFFLELVKDISNDLDLTSLSYKILIFVCLMVDADRCSLFLVEGAAAGKKTLVSKFFDVHAGTPLLPCSSTENSNEVQVPWGKGIIGYVGEHGETVNIPDAYQDRRFNDEIDKLTGYKTKSLLCMPIRNSDGEIIGVAQAINKVPEGAPFTEDDEKVMQMYLPFCGIAISNAQLFAASRKEYERSRALLEVVNDLFEEQTDLEKIVKKIMHRAQTLLKCERCSVLLLEDIESPVVKFTKSFELMSPKCSADAENSFKESVEKSSYSDWLINNSIAELVASTGLPVNVSDAYQDPRFDAEADQISGFHIRSVLCVPIWNSNHQIIGVAQVLNRLDGKPFDDADQRLFEAFVIFCGLGINNTIMYDQVKKSWAKQSVALDVLSYHATCSKAEVDKFKAANIPLVSELAIDDIHFDDFSLDVDAMITAALRMFMELGMVQKFKIDYETLCRWLLTVRKNYRMVLYHNWRHAFNVCQLMFAMLTTAGFQEILTEVEILAVIVGCLCHDLDHRGTNNAFQAKSDSALAQLYGTSATLEHHHFNHAVMILQSEGHNIFANLSSKEYSDLMQLLKQSILATDLTLYFERRTEFFELVRKGDYDWSITSHRDVFRSMLMTACDLGAVTKPWEISRQVAELVTSEFFEQGDRERSELKLTPSAIFDRNRKDELPRLQLEWIDSICMPLYQALVKVNAKLKPMLDSVAANRRKWEELHQKRLQVSAASPDPASPMVAGEDRL.

The disordered stretch occupies residues 42-121 (HTSGQGASSL…LQRRASQKEL (80 aa)). Phosphoserine occurs at positions 162, 163, and 239. GAF domains lie at 217 to 370 (DLTS…GIAI) and 402 to 558 (DLEK…GLGI). Residue Ser424 coordinates 3',5'-cyclic GMP. One can recognise a PDEase domain in the interval 588 to 912 (SKAEVDKFKA…RKWEELHQKR (325 aa)). His664 functions as the Proton donor in the catalytic mechanism. 4 residues coordinate a divalent metal cation: His668, His704, Asp705, and Asp816. Residues 913–933 (LQVSAASPDPASPMVAGEDRL) are disordered.

The protein belongs to the cyclic nucleotide phosphodiesterase family. It depends on a divalent metal cation as a cofactor. Expressed in testis and developing spermatoza.

It is found in the cytoplasm. It localises to the cytosol. It carries out the reaction 3',5'-cyclic GMP + H2O = GMP + H(+). The catalysed reaction is 3',5'-cyclic AMP + H2O = AMP + H(+). With respect to regulation, inhibited by 3-isobutyl-1-methylxanthine (IBMX), zaprinast and dipyridamole. cGMP acts as an allosteric activator. Functionally, plays a role in signal transduction by regulating the intracellular concentration of cyclic nucleotides cAMP and cGMP. Catalyzes the hydrolysis of both cAMP and cGMP to 5'-AMP and 5'-GMP, respectively. The polypeptide is Dual 3',5'-cyclic-AMP and -GMP phosphodiesterase 11A (Pde11a) (Mus musculus (Mouse)).